The primary structure comprises 235 residues: Claudin-16 (235 aa).

At 1–3 the chain is on the cytoplasmic side; that stretch reads MRD. Residues 4 to 24 traverse the membrane as a helical segment; sequence LLQYIACFFAFFSAGFLIVAT. Residues 25–79 lie on the Extracellular side of the membrane; sequence WTDCWMVNADDSLEVSTKCRGLWWECVTNAFDGIRTCDEYDSILAEHPLKLVVTR. The helical transmembrane segment at 80–100 threads the bilayer; that stretch reads ALMITADILAGFGFLTLLLGL. Residues 101 to 115 lie on the Cytoplasmic side of the membrane; sequence DCVKFLPDEPYIKVR. Residues 116–136 form a helical membrane-spanning segment; that stretch reads ICFVAGATLLIAGTPGIIGSV. The Extracellular segment spans residues 137 to 169; that stretch reads WYAVDVYVERSTLVLHNIFLGIQYKFGWSCWLG. Residues 170 to 190 traverse the membrane as a helical segment; sequence MAGSLGCFLAGAVLTCCLYLF. The Cytoplasmic portion of the chain corresponds to 191–235; that stretch reads KDVGPERNYPYSLRKAYSAAGVSMAKSYSAPRTETAKMYAVDTRV. The Interaction with TJP1 signature appears at 233–235; it reads TRV.

The protein belongs to the claudin family. Can form heteropolymeric tight junction strands with other claudins. Interacts with CLDN19. Interacts (via PDZ-binding motif TRV) with TJP1 (via PDZ domain). Cannot form tight junction strands on its own. As to expression, kidney-specific, including the thick ascending limb of Henle (TAL).

The protein resides in the cell junction. Its subcellular location is the tight junction. It is found in the cell membrane. It carries out the reaction Mg(2+)(in) = Mg(2+)(out). The enzyme catalyses Ca(2+)(in) = Ca(2+)(out). The catalysed reaction is Na(+)(in) = Na(+)(out). It catalyses the reaction K(+)(in) = K(+)(out). It carries out the reaction Rb(+)(in) = Rb(+)(out). The enzyme catalyses Cs(+)(in) = Cs(+)(out). The catalysed reaction is Li(+)(in) = Li(+)(out). Its function is as follows. Forms paracellular channels: coassembles with CLDN19 into tight junction strands with cation-selective channels through the strands, conveying epithelial permeability in a process known as paracellular tight junction permeability. Involved in the maintenance of ion gradients along the nephron. In the thick ascending limb (TAL) of Henle's loop, facilitates sodium paracellular permeability from the interstitial compartment to the lumen, contributing to the lumen-positive transepithelial potential that drives paracellular magnesium and calcium reabsorption. This chain is Claudin-16, found in Homo sapiens (Human).